The chain runs to 544 residues: Chaperonin GroEL (544 aa).

ATP contacts are provided by residues 30–33 (TLGP), Lys-51, 87–91 (DGTTT), Gly-415, and Asp-495.

It belongs to the chaperonin (HSP60) family. As to quaternary structure, forms a cylinder of 14 subunits composed of two heptameric rings stacked back-to-back. Interacts with the co-chaperonin GroES.

It is found in the cytoplasm. The catalysed reaction is ATP + H2O + a folded polypeptide = ADP + phosphate + an unfolded polypeptide.. Functionally, together with its co-chaperonin GroES, plays an essential role in assisting protein folding. The GroEL-GroES system forms a nano-cage that allows encapsulation of the non-native substrate proteins and provides a physical environment optimized to promote and accelerate protein folding. This is Chaperonin GroEL from Neisseria meningitidis serogroup A / serotype 4A (strain DSM 15465 / Z2491).